A 164-amino-acid chain; its full sequence is Urease subunit beta (164 aa).

2 stretches are compositionally biased toward polar residues: residues 1-10 (MSTKTNSTKA) and 20-32 (TNRG…GYSE). The disordered stretch occupies residues 1–32 (MSTKTNSTKATSEKTDSLKTNRGTKSSAGYSE).

It belongs to the urease beta subunit family. As to quaternary structure, heterotrimer of UreA (gamma), UreB (beta) and UreC (alpha) subunits. Three heterotrimers associate to form the active enzyme.

The protein resides in the cytoplasm. It carries out the reaction urea + 2 H2O + H(+) = hydrogencarbonate + 2 NH4(+). Its pathway is nitrogen metabolism; urea degradation; CO(2) and NH(3) from urea (urease route): step 1/1. The protein is Urease subunit beta of Yersinia enterocolitica serotype O:8 / biotype 1B (strain NCTC 13174 / 8081).